The sequence spans 424 residues: Virion nicking-joining enzyme (424 aa).

2 consecutive PLD phosphodiesterase domains span residues 110 to 137 and 320 to 346; these read LGGVLHTKFWISDNTHIYLGSANMDWRS and YSRVNHAKYMVTDKTAYIGTSNWTGNY.

This sequence belongs to the orthopoxvirus OPG042 family.

The protein localises to the virion. In terms of biological role, DNA nicking enzyme that cleaves extruded cruciform DNA at its tip. Probably nicks viral hairpins. The protein is Virion nicking-joining enzyme (OPG042) of Homo sapiens (Human).